The sequence spans 572 residues: MKKRALLLSMSVLAMLYIPAGQAAEIDRLTVVKQYVDNVLNKASDTYHGDKPSPLLADGVDPRTGQQMEWIFPDGRRAVLSNFSAQQNLMRVMSGLSELSGDPQYQKRAEDIVRYHFQNYQDNSGLLYWGGHRFVDLKTLQPEGPSEKEKVHELKNAYPYYDLMFSVDSDATTRFIRGFWNAHVYDWRILETSRHGEYGKPMGALWESTFEQQPPFFATKGLSFLNAGNDLIYSASLLYKYQQDQGALVWAKRLADQYVLPRDAKTGLGVYQFTQALKREEPTDDADTHSKFGDRAQRQFGPEFGPTALEGNMMLKGRTSTLYSENALMQLQLGKDLGGQGDDLLKWTVDGLKAFAKYGYNEQDNTFRPMIANGQDLSNYTLPRDGYYGKKGSVLKPYKAGNEFLISYARAYAVDNDPLLWKVARGIASDQGLGDIGSAPGKEMKVKLDTTNSDPYALFALLDLYNASQVAEYRSLAEKVADNIIKTRYIDGFFMASPDRQYADVDAIEPYALLALEASLRNKPQAVAPFLNGAGFTEGAYLMADGSARISTRDNELFLLNVGETLQPNGRK.

Residues 1-23 form the signal peptide; that stretch reads MKKRALLLSMSVLAMLYIPAGQA.

It belongs to the polysaccharide lyase 2 family.

It is found in the periplasm. It catalyses the reaction Eliminative cleavage of (1-&gt;4)-alpha-D-galacturonan to give oligosaccharides with 4-deoxy-alpha-D-galact-4-enuronosyl groups at their non-reducing ends.. It participates in glycan metabolism; pectin degradation; 2-dehydro-3-deoxy-D-gluconate from pectin: step 2/5. The polypeptide is Periplasmic pectate lyase (pelY) (Yersinia pseudotuberculosis serotype I (strain IP32953)).